The primary structure comprises 183 residues: Bifunctional protein PyrR (183 aa).

Positions 102 to 114 (VVLVDDVLYTGRT) match the PRPP-binding motif.

This sequence belongs to the purine/pyrimidine phosphoribosyltransferase family. PyrR subfamily. As to quaternary structure, homodimer and homohexamer; in equilibrium.

It carries out the reaction UMP + diphosphate = 5-phospho-alpha-D-ribose 1-diphosphate + uracil. Its function is as follows. Regulates transcriptional attenuation of the pyrimidine nucleotide (pyr) operon by binding in a uridine-dependent manner to specific sites on pyr mRNA. This disrupts an antiterminator hairpin in the RNA and favors formation of a downstream transcription terminator, leading to a reduced expression of downstream genes. Also displays a weak uracil phosphoribosyltransferase activity which is not physiologically significant. This is Bifunctional protein PyrR from Listeria monocytogenes serotype 4b (strain CLIP80459).